We begin with the raw amino-acid sequence, 153 residues long: Aspartate carbamoyltransferase regulatory chain (153 aa).

4 residues coordinate Zn(2+): C109, C114, C138, and C141.

It belongs to the PyrI family. As to quaternary structure, contains catalytic and regulatory chains. The cofactor is Zn(2+).

Involved in allosteric regulation of aspartate carbamoyltransferase. The protein is Aspartate carbamoyltransferase regulatory chain of Edwardsiella ictaluri (strain 93-146).